The chain runs to 139 residues: Putative pre-16S rRNA nuclease (139 aa).

This sequence belongs to the YqgF nuclease family.

The protein localises to the cytoplasm. Could be a nuclease involved in processing of the 5'-end of pre-16S rRNA. The polypeptide is Putative pre-16S rRNA nuclease (Streptococcus sanguinis (strain SK36)).